A 354-amino-acid polypeptide reads, in one-letter code: Ferrochelatase (354 aa).

Residues His-204 and Glu-306 each contribute to the Fe cation site.

The protein belongs to the ferrochelatase family.

Its subcellular location is the cytoplasm. The enzyme catalyses heme b + 2 H(+) = protoporphyrin IX + Fe(2+). Its pathway is porphyrin-containing compound metabolism; protoheme biosynthesis; protoheme from protoporphyrin-IX: step 1/1. In terms of biological role, catalyzes the ferrous insertion into protoporphyrin IX. The protein is Ferrochelatase of Coxiella burnetii (strain Dugway 5J108-111).